The sequence spans 854 residues: MAEGFAANRQWIGPEEAEELLDFDIAIQMNEEGPLNPGVNPFRVPGITEAEKQEYCNILQPKLQDLKGKIQEVKLEEGNAGKFRRARFLRYSDETVLSLIHLFIGYCPHLCRRHELGSLRHDIDIEALQEERYNDREKGITDNIKYGKRCLIGTAVLYLLLSLGIIIHTCKAQVVWRLPPLVVPVEESEIIFWDCWAPEEPACQDFLGAMIHLKASTNISIQEGPTLGNWAREIWGTLFKKATRQCRRGRIWRRWNETITGPLGCANNTCYNISVIVPDYQCYLDRVDTWLQGKVNISLCLTGGKMLYNKETKQLSYCTDPLQIPLINYTFGPNQTCMWNTSQIQDPEIPKCGWWNQNAYYNSCRWEHTDVQFQCQRTQSQPGSWIRAISSWKQRNRWEWRPDFESEKVKVSLQCNSTKNLTFAMRSSGDYGEVTGAWIEFGCHRTKSKYHTEARFRIRCRWNVGDNTSLIDTCGETQNVSRANPVDCTMYANRMYNCSLQNGFTMKVDDLIMHFNKTKAVEMYNIAGNWSCKSDLPPTWGYMNCNCTNSTNSGTGIRMACPRNQGILRNWYNPVAGLRQSLEKYQVVKQPDYLVVPGEVMEYKPRRKRAAIHVMLALATVLSMAGAGTGATAIGMVTQYQQVLATHQEAIEKVTEALKINNLRLVTLEHQVLVIGLKVEAMEKFLYTAFAMQELGCNQNQFFCKVPSALWERYNMTINQTIWNHGNITLGEWYNQTKDLQQRFYEIIMDIEQNNVQGKKGLQQLQEWEDWVGWIGNIPQYLKGLLGGILGIGLGMLLLILCLPTLVDCIRNCIHKILGYTVIAMPEVEEEEIQPQMELRRNGRQCGMSEKEEE.

Residues 1–783 are Extracellular-facing; that stretch reads MAEGFAANRQ…WIGNIPQYLK (783 aa). Asn218, Asn256, Asn267, Asn272, Asn296, Asn328, Asn334, Asn340, Asn416, Asn420, Asn479, Asn497, Asn529, Asn546, and Asn549 each carry an N-linked (GlcNAc...) asparagine; by host glycan. The tract at residues 614–634 is fusion peptide; sequence VMLALATVLSMAGAGTGATAI. Positions 641 to 691 form a coiled coil; that stretch reads QQVLATHQEAIEKVTEALKINNLRLVTLEHQVLVIGLKVEAMEKFLYTAFA. The tract at residues 660 to 678 is immunosuppression; the sequence is INNLRLVTLEHQVLVIGLK. 4 N-linked (GlcNAc...) asparagine; by host glycosylation sites follow: Asn715, Asn719, Asn727, and Asn735. Residues 734-770 are a coiled coil; sequence YNQTKDLQQRFYEIIMDIEQNNVQGKKGLQQLQEWED. A helical transmembrane segment spans residues 784-804; sequence GLLGGILGIGLGMLLLILCLP. The Cytoplasmic portion of the chain corresponds to 805–854; it reads TLVDCIRNCIHKILGYTVIAMPEVEEEEIQPQMELRRNGRQCGMSEKEEE.

In terms of assembly, the mature envelope protein (Env) consists of a trimer of SU-TM heterodimers attached by noncovalent interactions or by a labile interchain disulfide bond. Specific enzymatic cleavages in vivo yield mature proteins. Envelope glycoproteins are synthesized as an inactive precursor that is N-glycosylated and processed likely by host cell furin or by a furin-like protease in the Golgi to yield the mature SU and TM proteins. The cleavage site between SU and TM requires the minimal sequence [KR]-X-[KR]-R.

Its subcellular location is the virion membrane. It is found in the host cell membrane. Its function is as follows. The surface protein (SU) attaches the virus to the host cell by binding to its receptor. This interaction triggers the refolding of the transmembrane protein (TM) and is thought to activate its fusogenic potential by unmasking its fusion peptide. Fusion occurs at the host cell plasma membrane. In terms of biological role, the transmembrane protein (TM) acts as a class I viral fusion protein. Under the current model, the protein has at least 3 conformational states: pre-fusion native state, pre-hairpin intermediate state, and post-fusion hairpin state. During viral and target cell membrane fusion, the coiled coil regions (heptad repeats) assume a trimer-of-hairpins structure, positioning the fusion peptide in close proximity to the C-terminal region of the ectodomain. The formation of this structure appears to drive apposition and subsequent fusion of viral and target cell membranes. Membranes fusion leads to delivery of the nucleocapsid into the cytoplasm. The protein is Envelope glycoprotein gp150 (env) of Feline immunodeficiency virus (isolate Wo) (FIV).